Consider the following 488-residue polypeptide: Zinc metalloproteinase-disintegrin agkistin (488 aa).

A signal peptide spans 1–20 (MIQVLLVTICLAVFPYQGSS). Residues 21–195 (IILESGNVND…NFPPDGRIEF (175 aa)) constitute a propeptide that is removed on maturation. In terms of domain architecture, Peptidase M12B spans 198–394 (RYIELVIVAD…NPLASYCLYN (197 aa)). A Ca(2+)-binding site is contributed by E201. An N-linked (GlcNAc...) asparagine glycan is attached at N258. D285 serves as a coordination point for Ca(2+). 3 cysteine pairs are disulfide-bonded: C309–C391, C349–C373, and C351–C356. H334 contacts Zn(2+). The active site involves E335. Residues H338 and H344 each coordinate Zn(2+). Residues C391, N394, V406, N409, E413, E416, and D419 each contribute to the Ca(2+) site. The 85-residue stretch at 404–488 (PPVCGNYYLE…AGCPRNPSHA (85 aa)) folds into the Disintegrin domain. 7 disulfides stabilise this stretch: C407–C426, C418–C436, C420–C431, C430–C453, C444–C450, C449–C474, and C462–C481. A Cell attachment site motif is present at residues 466 to 468 (RGD).

The protein belongs to the venom metalloproteinase (M12B) family. P-II subfamily. P-IIb sub-subfamily. In terms of assembly, monomer. It depends on Zn(2+) as a cofactor. In terms of tissue distribution, expressed by the venom gland.

The protein resides in the secreted. Inhibits ADP-induced human platelet aggregation, inhibits bovine aortic endothelial cells (BAEC) migration, has anti-angiogenic activity and induces BAEC and human micro-vascular endothelial cell (HMEC) apoptosis. The metalloproteinase domain may act in hemorrhage. The chain is Zinc metalloproteinase-disintegrin agkistin from Gloydius halys (Chinese water mocassin).